A 297-amino-acid polypeptide reads, in one-letter code: HTH-type transcriptional regulator ArgP (297 aa).

An HTH lysR-type domain is found at 4-60 (PDYRTLQALDAVIRERGFERAAQKLCITQSAVSQRIKQLENLFGQPLLVRTVPPRPT). Residues 21 to 40 (FERAAQKLCITQSAVSQRIK) constitute a DNA-binding region (H-T-H motif).

It belongs to the LysR transcriptional regulatory family. Homodimer.

In terms of biological role, controls the transcription of genes involved in arginine and lysine metabolism. This Serratia proteamaculans (strain 568) protein is HTH-type transcriptional regulator ArgP.